Reading from the N-terminus, the 309-residue chain is Protein FdhE homolog (309 aa).

It belongs to the FdhE family.

It is found in the cytoplasm. In terms of biological role, necessary for formate dehydrogenase activity. This is Protein FdhE homolog from Serratia proteamaculans (strain 568).